The following is a 92-amino-acid chain: Small ribosomal subunit protein uS19 (92 aa).

The protein belongs to the universal ribosomal protein uS19 family.

Its function is as follows. Protein S19 forms a complex with S13 that binds strongly to the 16S ribosomal RNA. This Nostoc punctiforme (strain ATCC 29133 / PCC 73102) protein is Small ribosomal subunit protein uS19.